A 798-amino-acid chain; its full sequence is Probable G-protein coupled receptor 156 (798 aa).

The Extracellular portion of the chain corresponds to methionine 1–leucine 49. Residue asparagine 6 is glycosylated (N-linked (GlcNAc...) asparagine). A helical membrane pass occupies residues leucine 50–phenylalanine 70. Residues threonine 71–asparagine 86 lie on the Cytoplasmic side of the membrane. A helical transmembrane segment spans residues leucine 87–isoleucine 107. Residues glutamine 108–alanine 118 lie on the Extracellular side of the membrane. Residues leucine 119 to leucine 139 form a helical membrane-spanning segment. Topologically, residues glycine 140–glutamine 164 are cytoplasmic. The helical transmembrane segment at leucine 165–leucine 185 threads the bilayer. At threonine 186–aspartate 222 the chain is on the extracellular side. A helical membrane pass occupies residues valine 223–alanine 243. At glycine 244–serine 257 the chain is on the cytoplasmic side. The helical transmembrane segment at leucine 258–threonine 278 threads the bilayer. Topologically, residues arginine 279–valine 288 are extracellular. Residues phenylalanine 289–isoleucine 309 traverse the membrane as a helical segment. Residues proline 310–valine 798 lie on the Cytoplasmic side of the membrane. The stretch at aspartate 353–glutamate 390 forms a coiled coil. 3 disordered regions span residues histidine 441–proline 497, serine 546–glutamate 666, and proline 693–serine 715. Residues proline 479–glutamine 492 are compositionally biased toward basic and acidic residues. Residues leucine 559 to serine 572 show a composition bias toward polar residues. Positions valine 583–serine 594 are enriched in basic residues. Polar residues predominate over residues histidine 606–arginine 624. The segment covering proline 639 to proline 648 has biased composition (low complexity).

The protein belongs to the G-protein coupled receptor 3 family. GABA-B receptor subfamily. As to expression, expressed in the outer and inner hair cells of the organ of Corti (at protein level). Expressed in the utricle and saccule within the vestibule (at protein level).

The protein resides in the cell membrane. Its subcellular location is the postsynaptic cell membrane. Its function is as follows. Orphan G-protein coupled receptor involved in the regulation of hair cell orientation in mechanosensory organs of the inner ear. It is required to trigger a 180 degree reversal in hair cell orientation, creating a virtual line of polarity reversal (LPR) across which stereociliary bundles are arranged in opposite orientations. The chain is Probable G-protein coupled receptor 156 (Gpr156) from Mus musculus (Mouse).